A 167-amino-acid chain; its full sequence is Leptin (167 aa).

The N-terminal stretch at 1 to 21 (MYWRTLWGFLWLWPYLFYIQA) is a signal peptide. An intrachain disulfide couples Cys-117 to Cys-167.

Belongs to the leptin family.

Its subcellular location is the secreted. In terms of biological role, key player in the regulation of energy balance and body weight control. Once released into the circulation, has central and peripheral effects by binding LEPR, found in many tissues, which results in the activation of several major signaling pathways. In the hypothalamus, acts as an appetite-regulating factor that induces a decrease in food intake and an increase in energy consumption by inducing anorexinogenic factors and suppressing orexigenic neuropeptides, also regulates bone mass and secretion of hypothalamo-pituitary-adrenal hormones. In the periphery, increases basal metabolism, influences reproductive function, regulates pancreatic beta-cell function and insulin secretion, is pro-angiogenic for endothelial cell and affects innate and adaptive immunity. In the arcuate nucleus of the hypothalamus, activates by depolarization POMC neurons inducing FOS and SOCS3 expression to release anorexigenic peptides and inhibits by hyperpolarization NPY neurons inducing SOCS3 with a consequent reduction on release of orexigenic peptides. In addition to its known satiety inducing effect, has a modulatory role in nutrient absorption. In the intestine, reduces glucose absorption by enterocytes by activating PKC and leading to a sequential activation of p38, PI3K and ERK signaling pathways which exerts an inhibitory effect on glucose absorption. Acts as a growth factor on certain tissues, through the activation of different signaling pathways increases expression of genes involved in cell cycle regulation such as CCND1, via JAK2-STAT3 pathway, or VEGFA, via MAPK1/3 and PI3K-AKT1 pathways. May also play an apoptotic role via JAK2-STAT3 pathway and up-regulation of BIRC5 expression. Pro-angiogenic, has mitogenic activity on vascular endothelial cells and plays a role in matrix remodeling by regulating the expression of matrix metalloproteinases (MMPs) and tissue inhibitors of metalloproteinases (TIMPs). In innate immunity, modulates the activity and function of neutrophils by increasing chemotaxis and the secretion of oxygen radicals. Increases phagocytosis by macrophages and enhances secretion of pro-inflammatory mediators. Increases cytotoxic ability of NK cells. Plays a pro-inflammatory role, in synergy with IL1B, by inducing NOS2 which promotes the production of IL6, IL8 and Prostaglandin E2, through a signaling pathway that involves JAK2, PI3K, MAP2K1/MEK1 and MAPK14/p38. In adaptive immunity, promotes the switch of memory T-cells towards T helper-1 cell immune responses. Increases CD4(+)CD25(-) T-cell proliferation and reduces autophagy during TCR (T-cell receptor) stimulation, through MTOR signaling pathway activation and BCL2 up-regulation. The sequence is that of Leptin (LEP) from Macaca mulatta (Rhesus macaque).